The primary structure comprises 163 residues: Cyanate hydratase (163 aa).

Residues Arg-103, Glu-106, and Ser-129 contribute to the active site.

Belongs to the cyanase family.

It catalyses the reaction cyanate + hydrogencarbonate + 3 H(+) = NH4(+) + 2 CO2. Catalyzes the reaction of cyanate with bicarbonate to produce ammonia and carbon dioxide. The protein is Cyanate hydratase of Talaromyces marneffei (strain ATCC 18224 / CBS 334.59 / QM 7333) (Penicillium marneffei).